The sequence spans 205 residues: LexA repressor (205 aa).

The H-T-H motif DNA-binding region spans arginine 28 to lysine 48. Residues serine 122 and lysine 159 each act as for autocatalytic cleavage activity in the active site.

The protein belongs to the peptidase S24 family. In terms of assembly, homodimer.

The catalysed reaction is Hydrolysis of Ala-|-Gly bond in repressor LexA.. In terms of biological role, represses a number of genes involved in the response to DNA damage (SOS response), including recA and lexA. In the presence of single-stranded DNA, RecA interacts with LexA causing an autocatalytic cleavage which disrupts the DNA-binding part of LexA, leading to derepression of the SOS regulon and eventually DNA repair. This is LexA repressor from Shewanella denitrificans (strain OS217 / ATCC BAA-1090 / DSM 15013).